Here is a 1103-residue protein sequence, read N- to C-terminus: Centrosomal protein of 126 kDa (1103 aa).

Residues 1–12 (MLAGRPGAQSAG) show a composition bias toward low complexity. Positions 1-36 (MLAGRPGAQSAGAGVGAGPPDAPGARDGGGRPRPGA) are disordered. Coiled-coil stretches lie at residues 43-116 (HLEK…FQRA) and 182-222 (QKHL…KLLE). Disordered regions lie at residues 380 to 409 (NTAESNVVRASDPTEGAVQRERPAQMESPT) and 723 to 812 (ESKA…PGQS). A compositionally biased stretch (basic and acidic residues) spans 723–735 (ESKAPVHASDSKT). The span at 736–748 (QKTKPQRGVKFTR) shows a compositional bias: basic residues. 2 stretches are compositionally biased toward polar residues: residues 763–784 (RKPTVSQPQTSSKANTVAQTQG) and 798–812 (NIKSGKNMQVSPGQS).

As to quaternary structure, interacts with DCTN1.

The protein localises to the midbody. Its subcellular location is the cytoplasm. The protein resides in the cytoskeleton. It localises to the microtubule organizing center. It is found in the centrosome. The protein localises to the cilium basal body. Functionally, participate in cytokinesis. Necessary for microtubules and mitotic spindle organization. Involved in primary cilium formation. The protein is Centrosomal protein of 126 kDa of Mus musculus (Mouse).